The primary structure comprises 353 residues: Photosystem II D2 protein (353 aa).

An N-acetylthreonine modification is found at threonine 2. Position 2 is a phosphothreonine (threonine 2). The helical transmembrane segment at cysteine 41–threonine 61 threads the bilayer. A chlorophyll a-binding site is contributed by histidine 118. The chain crosses the membrane as a helical span at residues glycine 125–proline 141. Pheophytin a is bound by residues glutamine 130 and asparagine 143. The chain crosses the membrane as a helical span at residues valine 153 to serine 166. Histidine 198 is a chlorophyll a binding site. Residues alanine 208–aspartate 228 form a helical membrane-spanning segment. 2 residues coordinate a plastoquinone: histidine 215 and phenylalanine 262. Histidine 215 is a binding site for Fe cation. Histidine 269 lines the Fe cation pocket. Residues glycine 279–arginine 295 form a helical membrane-spanning segment.

This sequence belongs to the reaction center PufL/M/PsbA/D family. PSII is composed of 1 copy each of membrane proteins PsbA, PsbB, PsbC, PsbD, PsbE, PsbF, PsbH, PsbI, PsbJ, PsbK, PsbL, PsbM, PsbT, PsbX, PsbY, PsbZ, Psb30/Ycf12, at least 3 peripheral proteins of the oxygen-evolving complex and a large number of cofactors. It forms dimeric complexes. The D1/D2 heterodimer binds P680, chlorophylls that are the primary electron donor of PSII, and subsequent electron acceptors. It shares a non-heme iron and each subunit binds pheophytin, quinone, additional chlorophylls, carotenoids and lipids. There is also a Cl(-1) ion associated with D1 and D2, which is required for oxygen evolution. The PSII complex binds additional chlorophylls, carotenoids and specific lipids. serves as cofactor.

It is found in the plastid. It localises to the chloroplast thylakoid membrane. It catalyses the reaction 2 a plastoquinone + 4 hnu + 2 H2O = 2 a plastoquinol + O2. Functionally, photosystem II (PSII) is a light-driven water:plastoquinone oxidoreductase that uses light energy to abstract electrons from H(2)O, generating O(2) and a proton gradient subsequently used for ATP formation. It consists of a core antenna complex that captures photons, and an electron transfer chain that converts photonic excitation into a charge separation. The D1/D2 (PsbA/PsbD) reaction center heterodimer binds P680, the primary electron donor of PSII as well as several subsequent electron acceptors. D2 is needed for assembly of a stable PSII complex. The chain is Photosystem II D2 protein from Nymphaea alba (White water-lily).